The sequence spans 166 residues: uncharacterized protein (166 aa).

This is an uncharacterized protein from Enterobacteria phage T4 (Bacteriophage T4).